The chain runs to 361 residues: D-alanine--D-alanine ligase (361 aa).

The region spanning 134-344 (KLLLKSFDIP…FKDLVDNLID (211 aa)) is the ATP-grasp domain. 167–222 (KEVLGYPVIVKPAVLGSSIGINVAYSENQIESFIKEALKYDLTIVIEKFIEAREIE) contacts ATP. Mg(2+) is bound by residues aspartate 297, glutamate 311, and asparagine 313.

This sequence belongs to the D-alanine--D-alanine ligase family. It depends on Mg(2+) as a cofactor. Requires Mn(2+) as cofactor.

It localises to the cytoplasm. It carries out the reaction 2 D-alanine + ATP = D-alanyl-D-alanine + ADP + phosphate + H(+). Its pathway is cell wall biogenesis; peptidoglycan biosynthesis. Its function is as follows. Cell wall formation. The chain is D-alanine--D-alanine ligase from Borreliella burgdorferi (strain ATCC 35210 / DSM 4680 / CIP 102532 / B31) (Borrelia burgdorferi).